The chain runs to 108 residues: UPF0060 membrane protein YnfA (108 aa).

Residues 1 to 5 lie on the Periplasmic side of the membrane; the sequence is MIKTT. A helical transmembrane segment spans residues 6–26; sequence LLFFATALCEIIGCFLPWLWL. The Cytoplasmic segment spans residues 27-30; it reads KRNA. The helical transmembrane segment at 31-51 threads the bilayer; sequence SIWLLLPAGISLALFVWLLTL. The Periplasmic segment spans residues 52–60; that stretch reads HPAASGRVY. Residues 61–81 form a helical membrane-spanning segment; that stretch reads AAYGGVYVCTALMWLRVVDGV. At 82–84 the chain is on the cytoplasmic side; it reads KLT. Residues 85–105 traverse the membrane as a helical segment; that stretch reads LYDWTGPLIALCGMLIIVVGW. Topologically, residues 106–108 are periplasmic; it reads GRT.

This sequence belongs to the UPF0060 family.

It is found in the cell inner membrane. This chain is UPF0060 membrane protein YnfA, found in Escherichia coli O157:H7.